Consider the following 400-residue polypeptide: Small ribosomal subunit protein bS1 (400 aa).

S1 motif domains lie at 17–87 (GDVV…VTYL), 107–173 (EEVV…LSRR), 194–262 (GDVV…LSLK), and 279–348 (GDVV…LSIK). A compositionally biased stretch (basic and acidic residues) spans 351–366 (EERPAQEEGQKEEKRA). The disordered stretch occupies residues 351-400 (EERPAQEEGQKEEKRAARPRRPRRQEKRDFELPETQTGFSMADLFGDIEL).

The protein belongs to the bacterial ribosomal protein bS1 family. In terms of processing, phosphorylated.

Binds mRNA; thus facilitating recognition of the initiation point. It is needed to translate mRNA with a short Shine-Dalgarno (SD) purine-rich sequence. In Streptococcus pneumoniae (strain ATCC BAA-255 / R6), this protein is Small ribosomal subunit protein bS1 (rpsA).